The primary structure comprises 305 residues: Acetylglutamate kinase (305 aa).

Substrate is bound by residues 80–81 (GG), Arg-102, and Asn-196.

The protein belongs to the acetylglutamate kinase family. ArgB subfamily.

The protein localises to the cytoplasm. It catalyses the reaction N-acetyl-L-glutamate + ATP = N-acetyl-L-glutamyl 5-phosphate + ADP. Its pathway is amino-acid biosynthesis; L-arginine biosynthesis; N(2)-acetyl-L-ornithine from L-glutamate: step 2/4. Its function is as follows. Catalyzes the ATP-dependent phosphorylation of N-acetyl-L-glutamate. The chain is Acetylglutamate kinase from Chlorobium luteolum (strain DSM 273 / BCRC 81028 / 2530) (Pelodictyon luteolum).